The sequence spans 267 residues: Trehalose-phosphate phosphatase (267 aa).

Asp20 functions as the Nucleophile in the catalytic mechanism. Residues Asp20, Asp22, and Asp198 each coordinate Mg(2+). 20 to 22 (DLD) contacts substrate.

The protein belongs to the trehalose phosphatase family. Requires Mg(2+) as cofactor.

The catalysed reaction is alpha,alpha-trehalose 6-phosphate + H2O = alpha,alpha-trehalose + phosphate. The protein operates within glycan biosynthesis; trehalose biosynthesis. Removes the phosphate from trehalose 6-phosphate to produce free trehalose. This chain is Trehalose-phosphate phosphatase (otsB), found in Salmonella typhimurium (strain LT2 / SGSC1412 / ATCC 700720).